The following is a 732-amino-acid chain: Catalase-peroxidase (732 aa).

Positions 1–11 (MDAKTDDKDGG) are enriched in basic and acidic residues. The tract at residues 1–24 (MDAKTDDKDGGKCPFPHGGGRGRR) is disordered. The segment at residues 97 to 219 (WHSAGTYRTT…LGAVQMGLIY (123 aa)) is a cross-link (tryptophyl-tyrosyl-methioninium (Trp-Tyr) (with M-245)). H98 serves as the catalytic Proton acceptor. The tryptophyl-tyrosyl-methioninium (Tyr-Met) (with W-97) cross-link spans 219-245 (YVNPEGPNGNPDPVAAAKDIRETFARM). A heme b-binding site is contributed by H260.

It belongs to the peroxidase family. Peroxidase/catalase subfamily. Homodimer or homotetramer. Requires heme b as cofactor. Formation of the three residue Trp-Tyr-Met cross-link is important for the catalase, but not the peroxidase activity of the enzyme.

It carries out the reaction H2O2 + AH2 = A + 2 H2O. The catalysed reaction is 2 H2O2 = O2 + 2 H2O. Its function is as follows. Bifunctional enzyme with both catalase and broad-spectrum peroxidase activity. The protein is Catalase-peroxidase of Rhodopseudomonas palustris (strain HaA2).